Here is a 395-residue protein sequence, read N- to C-terminus: Cyclomarin C epoxidase CymV (395 aa).

The protein belongs to the cytochrome P450 family.

Functionally, cytochrome P450; part of the gene cluster that mediates the biosynthesis of cyclic heptapeptides, known as cyclomarins and also of cyclic dipeptides, called cyclomarazines, which have both antimicrobial and cytotoxic effects. First, CymD catalyzes the reverse N-prenylation of monomeric L-tryptophan with dimethylallyl diphosphate (DMAPP) to form N-(1,1-dimethylallyl)-tryptophan (r-N-DMAT). The N-(1,1-dimethylallyl)-tryptophan produced by CymD is then combined with a range of standard and nonproteinogenic amino acid substrates to synthesize the peptides, a process that is probably catalyzed by the non-canonical nonribosomal peptide synthetase (NRPS), CymA. Other proteins in the cluster catalyze further modifications of the peptides including CymV which catalyzes the oxidation of olefinic cyclomarins and cyclomarazines to their respective epoxide derivatives. This Salinispora arenicola (strain CNS-205) protein is Cyclomarin C epoxidase CymV.